Here is a 397-residue protein sequence, read N- to C-terminus: Enoyl-[acyl-carrier-protein] reductase [NADH] FabV (397 aa).

NAD(+)-binding positions include 48–53 (GASTGY), 74–75 (FE), 111–112 (DA), and 139–140 (LA). Residue Tyr-225 coordinates substrate. Catalysis depends on Tyr-235, which acts as the Proton donor. NAD(+)-binding positions include Lys-244 and 273–275 (VVT).

This sequence belongs to the TER reductase family. In terms of assembly, monomer.

It carries out the reaction a 2,3-saturated acyl-[ACP] + NAD(+) = a (2E)-enoyl-[ACP] + NADH + H(+). It functions in the pathway lipid metabolism; fatty acid biosynthesis. Its activity is regulated as follows. Resistant to triclosan. Involved in the final reduction of the elongation cycle of fatty acid synthesis (FAS II). Catalyzes the NADH-dependent reduction of the carbon-carbon double bond in the enoyl moiety that is covalently linked to an acyl carrier protein (ACP). This chain is Enoyl-[acyl-carrier-protein] reductase [NADH] FabV, found in Aeromonas salmonicida (strain A449).